The primary structure comprises 156 residues: MSRRRRAKKRIISQDPIYNSTLASKVINKILLNGKKTLAQYIFYETMKNIQEIYKKDPLDILRKAIKNASPQMETRKRRIGGTIYQVPVEVKEDRGTSLALKFIIEKARERKGRGISTKLKNEIIDASNNTGEAVKKKEEIHKTAEANKAFSNMKF.

The protein belongs to the universal ribosomal protein uS7 family. As to quaternary structure, part of the 30S ribosomal subunit.

The protein resides in the plastid. It is found in the chloroplast. One of the primary rRNA binding proteins, it binds directly to 16S rRNA where it nucleates assembly of the head domain of the 30S subunit. In Euglena gracilis, this protein is Small ribosomal subunit protein uS7c (rps7).